A 495-amino-acid chain; its full sequence is Aspartyl/glutamyl-tRNA(Asn/Gln) amidotransferase subunit B (495 aa).

Belongs to the GatB/GatE family. GatB subfamily. In terms of assembly, heterotrimer of A, B and C subunits.

The catalysed reaction is L-glutamyl-tRNA(Gln) + L-glutamine + ATP + H2O = L-glutaminyl-tRNA(Gln) + L-glutamate + ADP + phosphate + H(+). It carries out the reaction L-aspartyl-tRNA(Asn) + L-glutamine + ATP + H2O = L-asparaginyl-tRNA(Asn) + L-glutamate + ADP + phosphate + 2 H(+). Allows the formation of correctly charged Asn-tRNA(Asn) or Gln-tRNA(Gln) through the transamidation of misacylated Asp-tRNA(Asn) or Glu-tRNA(Gln) in organisms which lack either or both of asparaginyl-tRNA or glutaminyl-tRNA synthetases. The reaction takes place in the presence of glutamine and ATP through an activated phospho-Asp-tRNA(Asn) or phospho-Glu-tRNA(Gln). This Rippkaea orientalis (strain PCC 8801 / RF-1) (Cyanothece sp. (strain PCC 8801)) protein is Aspartyl/glutamyl-tRNA(Asn/Gln) amidotransferase subunit B.